The sequence spans 714 residues: Penicillin-binding protein 1F (714 aa).

Over 1–12 the chain is Cytoplasmic; sequence MFKIKKKKLFIP. The helical; Signal-anchor for type II membrane protein transmembrane segment at 13-33 threads the bilayer; that stretch reads IIILVLTAFLALIGYISIIFL. At 34 to 714 the chain is on the extracellular side; the sequence is GHYVIDEKKL…DYVQPKLFSS (681 aa). The segment at 49 to 217 is transglycosylase; the sequence is SKIVDQNGDE…STYSPILHPD (169 aa). E87 functions as the Proton donor; for transglycosylase activity in the catalytic mechanism. The segment at 297–592 is transpeptidase; that stretch reads SKLQKTAYQV…SSYPTRLFKD (296 aa). The active-site Acyl-ester intermediate; for transpeptidase activity is the S359.

This sequence in the N-terminal section; belongs to the glycosyltransferase 51 family. In the C-terminal section; belongs to the transpeptidase family.

It localises to the cell membrane. The enzyme catalyses [GlcNAc-(1-&gt;4)-Mur2Ac(oyl-L-Ala-gamma-D-Glu-L-Lys-D-Ala-D-Ala)](n)-di-trans,octa-cis-undecaprenyl diphosphate + beta-D-GlcNAc-(1-&gt;4)-Mur2Ac(oyl-L-Ala-gamma-D-Glu-L-Lys-D-Ala-D-Ala)-di-trans,octa-cis-undecaprenyl diphosphate = [GlcNAc-(1-&gt;4)-Mur2Ac(oyl-L-Ala-gamma-D-Glu-L-Lys-D-Ala-D-Ala)](n+1)-di-trans,octa-cis-undecaprenyl diphosphate + di-trans,octa-cis-undecaprenyl diphosphate + H(+). It carries out the reaction Preferential cleavage: (Ac)2-L-Lys-D-Ala-|-D-Ala. Also transpeptidation of peptidyl-alanyl moieties that are N-acyl substituents of D-alanine.. The protein operates within cell wall biogenesis; peptidoglycan biosynthesis. Functionally, cell wall formation. May be involved in outgrowth of the germinated spore or it could function in the synthesis of the germ cell wall. The protein is Penicillin-binding protein 1F (pbpF) of Bacillus subtilis (strain 168).